Reading from the N-terminus, the 597-residue chain is Elongation factor 4 (597 aa).

The region spanning 4-181 (SKIRNFSIIA…EIVDKISYPI (178 aa)) is the tr-type G domain. Residues 16–21 (DHGKST) and 128–131 (NKID) each bind GTP.

This sequence belongs to the TRAFAC class translation factor GTPase superfamily. Classic translation factor GTPase family. LepA subfamily.

The protein resides in the cell membrane. The enzyme catalyses GTP + H2O = GDP + phosphate + H(+). Required for accurate and efficient protein synthesis under certain stress conditions. May act as a fidelity factor of the translation reaction, by catalyzing a one-codon backward translocation of tRNAs on improperly translocated ribosomes. Back-translocation proceeds from a post-translocation (POST) complex to a pre-translocation (PRE) complex, thus giving elongation factor G a second chance to translocate the tRNAs correctly. Binds to ribosomes in a GTP-dependent manner. The chain is Elongation factor 4 from Mycoplasmopsis pulmonis (strain UAB CTIP) (Mycoplasma pulmonis).